Reading from the N-terminus, the 213-residue chain is MKAFTQHNGLVAPLDRANVDTDQIIPKQFLKSIKRTGFGPNLFDEWRYLDVGQPYQDNSKRPLNHDFVLNNARYQGASVLLARENFGCGSSREHAPWALEEYGFCAIIAPSYADIFFNNSFKNGLLPIILAEDDVDQLFKQVEASPGYQLRIDLQAQTVTRPDGEVLSFEIDAFRKHCLLNGLDDIGLTLMDADAIASFEGKHRASQPWLFRD.

The protein belongs to the LeuD family. LeuD type 1 subfamily. As to quaternary structure, heterodimer of LeuC and LeuD.

It carries out the reaction (2R,3S)-3-isopropylmalate = (2S)-2-isopropylmalate. It functions in the pathway amino-acid biosynthesis; L-leucine biosynthesis; L-leucine from 3-methyl-2-oxobutanoate: step 2/4. Functionally, catalyzes the isomerization between 2-isopropylmalate and 3-isopropylmalate, via the formation of 2-isopropylmaleate. This is 3-isopropylmalate dehydratase small subunit from Pseudomonas syringae pv. tomato (strain ATCC BAA-871 / DC3000).